A 49-amino-acid chain; its full sequence is Large ribosomal subunit protein bL33A (49 aa).

The protein belongs to the bacterial ribosomal protein bL33 family.

The polypeptide is Large ribosomal subunit protein bL33A (Bacillus cytotoxicus (strain DSM 22905 / CIP 110041 / 391-98 / NVH 391-98)).